Reading from the N-terminus, the 1866-residue chain is Rho GTPase-activating protein 100F (1866 aa).

Disordered stretches follow at residues 22 to 98 (MLCC…AGVK), 262 to 336 (RRGN…NNYS), and 466 to 530 (LRSS…DTEA). Over residues 59–77 (GNQQHHGNQQHHGNQQQHH) the composition is skewed to low complexity. In terms of domain architecture, PDZ spans 179–264 (LVEIVKRPGQ…LVLAIRQRRG (86 aa)). The span at 271 to 286 (PGPPTLSRPEQKPPPV) shows a compositional bias: pro residues. Residues 301 to 326 (TDRMPRPRSSRDRRTGDGREMTESRS) show a composition bias toward basic and acidic residues. Position 719 is a phosphoserine (S719). Positions 745 to 775 (AGPASPSGSILSTGGHQSPAPTPSATLPRPH) are disordered. Over residues 750 to 760 (PSGSILSTGGH) the composition is skewed to polar residues. The 120-residue stretch at 789 to 908 (KLDKPIVDIG…LRQSPLHQLA (120 aa)) folds into the C2 domain. The region spanning 948–1148 (ADLETVVNRE…YLLQIWPQPQ (201 aa)) is the Rho-GAP domain. 6 disordered regions span residues 1273–1328 (GGSV…QVKI), 1356–1380 (PTTQ…RRGN), 1393–1479 (SVVN…DLVS), 1514–1607 (FTPI…MVST), 1644–1727 (YTND…YGTL), and 1819–1840 (DEKP…ADKG). Residues 1282–1292 (DPSPLPLPGTP) are compositionally biased toward pro residues. The span at 1293–1302 (SPGSSSASTG) shows a compositional bias: low complexity. Composition is skewed to polar residues over residues 1356–1377 (PTTQ…TASR), 1393–1408 (SVVN…YTGS), and 1416–1429 (GNSS…NASG). Over residues 1443-1479 (SSATSSSSSSQATVLSAGSTATSAPTTSSDDSDDLVS) the composition is skewed to low complexity. Residues 1538–1587 (QLVTPISGSSSKPGATTGAISKYTTGSVESSINANSQKLSSPSRLCNSKD) are compositionally biased toward polar residues. Low complexity-rich tracts occupy residues 1590 to 1607 (SRTG…MVST) and 1644 to 1658 (YTND…SSKS). Gly residues predominate over residues 1659–1670 (GIGGGSGTGLGA). Low complexity-rich tracts occupy residues 1671-1688 (VSGA…LFGS) and 1696-1720 (GSSH…NHNT). A compositionally biased stretch (basic and acidic residues) spans 1830–1839 (HGEEKLGADK).

In terms of assembly, interacts (via PDZ domain) with Nrx-1; may recruit Nrx-1 to the presynaptic active zone.

It is found in the presynapse. Its function is as follows. GTPase activator for the Rho-type GTPases by converting them to an inactive GDP-bound state. Promotes the anchoring of Liprin-alpha clusters at synapses. Recruits and keeps Nrx-1 levels high in active zones in the presynapse opposite the postsynaptic region. The protein is Rho GTPase-activating protein 100F (RhoGAP100F) of Drosophila melanogaster (Fruit fly).